The following is a 1040-amino-acid chain: Myoblast growth factor receptor egl-15 (1040 aa).

A signal peptide spans Met-1–Cys-19. Residues Ser-20–Asp-525 lie on the Extracellular side of the membrane. The 93-residue stretch at Pro-33–Glu-125 folds into the Ig-like C2-type 1 domain. Cys-55 and Cys-109 are oxidised to a cystine. Residue Asn-121 is glycosylated (N-linked (GlcNAc...) asparagine). Basic and acidic residues predominate over residues Val-234–Lys-257. The segment at Val-234–Ser-267 is disordered. N-linked (GlcNAc...) asparagine glycans are attached at residues Asn-280 and Asn-299. Ig-like C2-type domains are found at residues Pro-287–Ile-383 and Pro-391–Thr-501. A disulfide bridge links Cys-314 with Cys-367. Residues Asn-401, Asn-407, Asn-433, Asn-440, Asn-449, Asn-474, and Asn-497 are each glycosylated (N-linked (GlcNAc...) asparagine). A disulfide bridge connects residues Cys-414 and Cys-485. A helical transmembrane segment spans residues Tyr-526–Cys-549. Over Lys-550–Phe-1040 the chain is Cytoplasmic. In terms of domain architecture, Protein kinase spans Leu-640–Met-931. Residues Leu-646–Val-654 and Lys-672 each bind ATP. The Proton acceptor role is filled by Asp-797. Tyr-828 carries the phosphotyrosine; by autocatalysis modification. Disordered regions lie at residues Glu-952–Glu-984 and Thr-1021–Phe-1040. Residues Pro-1022–Phe-1040 show a composition bias toward polar residues.

This sequence belongs to the protein kinase superfamily. Tyr protein kinase family. Fibroblast growth factor receptor subfamily. Mg(2+) is required as a cofactor. Activity is regulated by the phosphatase clr-1, however it is not known whether clr-1 acts directly on egl-15.

The protein resides in the membrane. It catalyses the reaction L-tyrosyl-[protein] + ATP = O-phospho-L-tyrosyl-[protein] + ADP + H(+). Functionally, receptor tyrosine kinase required for larval development. May phosphorylate adapter protein soc-1 which in turn may result in the recruitment and/or activation of phosphatase ptp-2. May activate the Ras/MAPK kinase signaling pathway which includes sem-5, sos-1, let-60/Ras, lin-45/Raf, mek-2 and mpk-1. Acts in the hypodermis to regulate axon growth and fluid homeostasis. Activates protein degradation in muscles. Probably following interaction with ligand let-756, negatively regulates membrane protrusion from body wall muscles during larval development. Plays a role in nicotinic acetylcholine receptor (nAChR)-mediated sensitivity to nicotine. Regulates synaptic levels of nAChR subunit lev-1 in the nerve cord. Affects the maintenance of axon position without affecting axon growth. Interaction with egl-17 is required for the guidance of sex myoblast migration during gonad development. In terms of biological role, interaction with let-756 appears to play a role in maintaining body morphology at higher temperatures. The sequence is that of Myoblast growth factor receptor egl-15 (egl-15) from Caenorhabditis elegans.